Consider the following 188-residue polypeptide: Adrenodoxin, mitochondrial (188 aa).

The N-terminal 64 residues, Met1–Arg64, are a transit peptide targeting the mitochondrion. Residue Ser67 is modified to Phosphoserine. One can recognise a 2Fe-2S ferredoxin-type domain in the interval Asp69 to Val175. Lys70 carries the N6-acetyllysine; alternate modification. Lys70 is modified (N6-succinyllysine; alternate). Residues Cys110, Cys116, Cys119, and Cys156 each contribute to the [2Fe-2S] cluster site. Lys162 is modified (N6-succinyllysine). A Phosphoserine modification is found at Ser181.

It belongs to the adrenodoxin/putidaredoxin family. In terms of assembly, interacts with CYP11A1. Requires [2Fe-2S] cluster as cofactor.

The protein resides in the mitochondrion matrix. Essential for the synthesis of various steroid hormones, participates in the reduction of mitochondrial cytochrome P450 for steroidogenesis. Transfers electrons from adrenodoxin reductase to CYP11A1, a cytochrome P450 that catalyzes cholesterol side-chain cleavage. Does not form a ternary complex with adrenodoxin reductase and CYP11A1 but shuttles between the two enzymes to transfer electrons. The chain is Adrenodoxin, mitochondrial (Fdx1) from Mus musculus (Mouse).